The primary structure comprises 662 residues: ATP-dependent RNA helicase DDX3X (662 aa).

Residue Ser2 is modified to N-acetylserine. Positions 2–139 (SHVAVENALG…KSDEDDWSKP (138 aa)) are required for TBK1 and IKBKE-dependent IFNB1 activation. Residues 12–21 (LDQQFAGLDL) carry the Nuclear export signal motif. A disordered region spans residues 19–144 (LDLNSSDNQS…DWSKPLPPSE (126 aa)). The span at 21–34 (LNSSDNQSGGSTAS) shows a compositional bias: polar residues. The tract at residues 38–44 (YIPPHLR) is interaction with EIF4E. Residues 44–68 (RNREATKGFYDKDSSGWSSSKDKDA) show a composition bias toward basic and acidic residues. Lys55 carries the N6-acetyllysine modification. Phosphoserine is present on residues Ser82 and Ser90. Over residues 94–130 (GRFDDRGRGDYDGIGGRGDRSGFGKFERGGNSRWCDK) the composition is skewed to basic and acidic residues. The interaction with IKBKE stretch occupies residues 100-110 (GRGDYDGIGGR). The segment at 100-662 (GRGDYDGIGG…NSQGVDWWGN (563 aa)) is interaction with GSK3B. The residue at position 101 (Arg101) is an Omega-N-methylarginine. Tyr104 carries the phosphotyrosine modification. Arg110 carries the post-translational modification Omega-N-methylarginine. Residue Lys118 is modified to N6-acetyllysine. The residue at position 131 (Ser131) is a Phosphoserine. Residues 139–172 (PLPPSERLEQELFSGGNTGINFEKYDDIPVEATG) form an interaction with CHUK region. Positions 180–208 (ESFSDVEMGEIIMGNIELTRYTRPTPVQK) match the Q motif motif. Ser183 is subject to Phosphoserine. 200–207 (YTRPTPVQ) contributes to the ATP binding site. The 193-residue stretch at 211 to 403 (IPIIKEKRDL…RDFLDEYIFL (193 aa)) folds into the Helicase ATP-binding domain. Lys215 is covalently cross-linked (Glycyl lysine isopeptide (Lys-Gly) (interchain with G-Cter in SUMO2)). 224–231 (AQTGSGKT) contributes to the ATP binding site. Positions 250–259 (ALRAMKENGR) are involved in stimulation of ATPase activity by DNA and RNA, nucleic acid binding and unwinding. Residues 347-350 (DEAD) carry the DEAD box motif. The 162-residue stretch at 414–575 (NITQKVVWVE…EVPSWLENMA (162 aa)) folds into the Helicase C-terminal domain. Ser456 carries the phosphoserine modification. The interaction with NXF1 stretch occupies residues 536–661 (GNLGLATSFF…YNSQGVDWWG (126 aa)). At Arg592 the chain carries Omega-N-methylarginine. A phosphoserine mark is found at Ser594, Ser605, and Ser612. The disordered stretch occupies residues 601–633 (DYRQSSGASSSSFSSSRASSSRSGGGGHGGSRG). A compositionally biased stretch (low complexity) spans 604–622 (QSSGASSSSFSSSRASSSR). An omega-N-methylarginine mark is found at Arg617 and Arg632. Residues 623–633 (SGGGGHGGSRG) are compositionally biased toward gly residues.

Belongs to the DEAD box helicase family. DDX3/DED1 subfamily. As to quaternary structure, homodimer; can bind RNA as a monomer and as a dimer/oligomer. Interacts with TDRD3. When phosphorylated, interacts with IRF3; the interaction facilitates the phosphorylation and activation of IRF3 by IKBKE. Directly interacts with XPO1/CRM1. The interaction with XPO1/CMR1 is dependent on the DDX3X nuclear export signal motif and XPO1 interaction with GTPase RAN in its active GTP-bound form. Weakly interacts with TBKBP1/SINTBAD. Directly interacts with TRAF3; this interaction stimulates TRAF3 'Lys-63' ubiquitination. Interacts with CSNK1E in a Wnt-dependent manner; this interaction greatly enhances CSNK1E affinity for ATP, stimulates its kinase activity and promotes CSNK1E-mediated DVL2 phosphorylation. In the presence of RNA, the interaction is decreased. Also interacts with CSNK1D and stimulates its kinase activity. Interacts with TRPV4; this interaction is decreased when the TRPV4 channel is activated, leading to DDX3X relocalization to the nucleus. Interacts with MAP3K14/NIK. Directly interacts with CHUK/IKKA after physiological activation of the TLR7 and TLR8 pathways; this interaction enhances CHUK autophosphorylation. May associate with EIF4F complex, composed of at least EIF4A, EIF4E and EIF4G1/EIF4G3. Directly interacts with EIF4E in an RNA-independent manner; this interaction enhances EIF4E cap-binding ability. Directly interacts with EIF4G1 in an RNA-independent manner. DDX3X competes with EIF4G1 for interaction with EIF4E. Interacts with EIF4A1 and EIF2S1 in an RNA-independent manner. Associates with the eukaryotic translation initiation factor 3 (eIF-3) complex, including with EIF3B and EIF3C subunits. Directly interacts with IKBKE/IKKE; this interaction stimulates IKBKE activating autophosphorylation and is induced upon viral infection. Interacts with TBK1. Interacts with SP1; this interaction potentiates SP1-induced CDKN1A/WAF1/CIP1 transcription. Interacts with GSK3A and GSK3B. Interacts with several death receptors, inclusing FAS, TNFRSF10A and TNFRSF10B. Recruited to TNFRSF10B in the absence of receptor stimulation. When TNFRSF10B is stimulated, further recruited to the receptor and cleaved by caspases. A large proteolytic fragment remains associated with TNFRSF10B. Interacts (via C-terminus) with NXF1/TAP; this interaction may be partly involved in DDX3X nuclear export and in NXF1 localization to stress granules. Identified in an mRNP complex, composed of at least DHX9, DDX3X, ELAVL1, HNRNPU, IGF2BP1/2, ILF3, PABPC1, PCBP2, PTBP2, STAU1, STAU2, SYNCRIP and YBX1. The interaction with IGF2BP1/2 is RNA-dependent. Directly interacts with PABPC1/PABP1 in an RNA-independent manner. This interaction increases in stressed cells and decreases during cell recovery. Interacts (via C-terminus) with MAVS/IPS-1; this interaction potentiates MAVS-mediated IFNB induction. Interacts with ERCC6/CBS. Interacts with DHX33 in an RNA-independent manner. Interacts with DDX5 in the cytoplasm; this interaction may be more efficient when both proteins are unphosphorylated. Interacts with RIGI. Interacts with IFIH1/MDA5. Interacts with NCAPH; this interaction may be important for the NCAPH localization at condensing chromosomes during mitosis. Interacts with NLRP3 (via NACHT domain) under inflammasome-activating conditions. Interacts with CAPRIN1. Interacts with HNF4A and NR0B2/SHP in an RNA-independent manner; this interaction disrupts the interaction between HNF4 and NR0B2 that forms inactive heterodimers and enhances the formation of active HNF4 homodimers. Interacts with CREBBP/CBP. Interacts with EP300/p300. Interacts with gamma-tubulin. Interacts with phosphorylated TP53. Directly interacts with RELA/p65; this interaction may trap RELA in the cytoplasm, impairing nuclear relocalization upon TNF activating signals. Post-translationally, phosphorylated by TBK1; the phosphorylation is required for the synergistic induction of IFNB mediated by TBK1 and DDX3X. Phosphorylated by IKBKE. Also phosphorylated by CSNK1E; this phosphorylation may inhibit RNA-stimulated ATPase activity. Upon stimulation of death receptors, including TNFRSF10B, recruited to receptors and cleaved by caspases. Proteolytic fragments remain associated with the receptors. This cleavage presumably inactivates DDX3X anti-apoptotic function. In terms of processing, ubiquitinated by RNF39 via 'Lys-48'-linked ubiquitination; leading to proteasomal degradation. Expressed in ovary, including in germinal vesicle immature and metaphase II (MII) stage oocytes (at protein level). In the brain, expressed in the granule cells of the cerebellum and dentate gyrus, the pyramidal cells of the hippocampus, the ependymal cells lining the ventricles, choroid plexi and olfactory bulb. Also accumulates in the thalamic nuclei, the dorsal region of the colliculi and the pontine nucleus.

Its subcellular location is the cell membrane. The protein localises to the nucleus. It localises to the cytoplasm. The protein resides in the stress granule. It is found in the inflammasome. Its subcellular location is the cell projection. The protein localises to the lamellipodium. The catalysed reaction is ATP + H2O = ADP + phosphate + H(+). Functionally, multifunctional ATP-dependent RNA helicase. The ATPase activity can be stimulated by various ribo-and deoxynucleic acids indicative for a relaxed substrate specificity. In vitro can unwind partially double-stranded DNA with a preference for 5'-single-stranded DNA overhangs. Binds RNA G-quadruplex (rG4s) structures, including those located in the 5'-UTR of NRAS mRNA. Involved in many cellular processes, which do not necessarily require its ATPase/helicase catalytic activities. Involved in transcription regulation. Positively regulates CDKN1A/WAF1/CIP1 transcription in an SP1-dependent manner, hence inhibits cell growth. This function requires its ATPase, but not helicase activity. CDKN1A up-regulation may be cell-type specific. Binds CDH1/E-cadherin promoter and represses its transcription. Potentiates HNF4A-mediated MTTP transcriptional activation; this function requires ATPase, but not helicase activity. Facilitates HNF4A acetylation, possibly catalyzed by CREBBP/EP300, thereby increasing the DNA-binding affinity of HNF4 to its response element. In addition, disrupts the interaction between HNF4 and SHP that forms inactive heterodimers and enhances the formation of active HNF4 homodimers. By promoting HNF4A-induced MTTP expression, may play a role in lipid homeostasis. May positively regulate TP53 transcription. Associates with mRNPs, predominantly with spliced mRNAs carrying an exon junction complex (EJC). Involved in the regulation of translation initiation. Not involved in the general process of translation, but promotes efficient translation of selected complex mRNAs, containing highly structured 5'-untranslated regions (UTR). This function depends on helicase activity. Might facilitate translation by resolving secondary structures of 5'-UTRs during ribosome scanning. Alternatively, may act prior to 43S ribosomal scanning and promote 43S pre-initiation complex entry to mRNAs exhibiting specific RNA motifs, by performing local remodeling of transcript structures located close to the cap moiety. Independently of its ATPase activity, promotes the assembly of functional 80S ribosomes and disassembles from ribosomes prior to the translation elongation process. Positively regulates the translation of cyclin E1/CCNE1 mRNA and consequently promotes G1/S-phase transition during the cell cycle. May activate TP53 translation. Required for endoplasmic reticulum stress-induced ATF4 mRNA translation. Independently of its ATPase/helicase activity, enhances IRES-mediated translation; this activity requires interaction with EIF4E. Independently of its ATPase/helicase activity, has also been shown specifically repress cap-dependent translation, possibly by acting on translation initiation factor EIF4E. Involved in innate immunity, acting as a viral RNA sensor. Binds viral RNAs and promotes the production of type I interferon (IFN-alpha and IFN-beta). Potentiate MAVS/RIGI-mediated induction of IFNB in early stages of infection. Enhances IFNB1 expression via IRF3/IRF7 pathway and participates in NFKB activation in the presence of MAVS and TBK1. Involved in TBK1 and IKBKE-dependent IRF3 activation leading to IFNB induction, acts as a scaffolding adapter that links IKBKE and IRF3 and coordinates their activation. Involved in the TLR7/TLR8 signaling pathway leading to type I interferon induction, including IFNA4 production. In this context, acts as an upstream regulator of IRF7 activation by MAP3K14/NIK and CHUK/IKKA. Stimulates CHUK autophosphorylation and activation following physiological activation of the TLR7 and TLR8 pathways, leading to MAP3K14/CHUK-mediated activatory phosphorylation of IRF7. Also stimulates MAP3K14/CHUK-dependent NF-kappa-B signaling. Negatively regulates TNF-induced IL6 and IL8 expression, via the NF-kappa-B pathway. May act by interacting with RELA/p65 and trapping it in the cytoplasm. May also bind IFNB promoter; the function is independent of IRF3. Involved in both stress and inflammatory responses. Independently of its ATPase/helicase activity, required for efficient stress granule assembly through its interaction with EIF4E, hence promotes survival in stressed cells. Independently of its helicase activity, regulates NLRP3 inflammasome assembly through interaction with NLRP3 and hence promotes cell death by pyroptosis during inflammation. This function is independent of helicase activity. Therefore DDX3X availability may be used to interpret stress signals and choose between pro-survival stress granules and pyroptotic NLRP3 inflammasomes and serve as a live-or-die checkpoint in stressed cells. In association with GSK3A/B, negatively regulates extrinsic apoptotic signaling pathway via death domain receptors, including TNFRSF10B, slowing down the rate of CASP3 activation following death receptor stimulation. Cleavage by caspases may inactivate DDX3X and relieve the inhibition. Independently of its ATPase/helicase activity, allosteric activator of CSNK1E. Stimulates CSNK1E-mediated phosphorylation of DVL2, thereby involved in the positive regulation of Wnt/beta-catenin signaling pathway. Also activates CSNK1A1 and CSNK1D in vitro, but it is uncertain if these targets are physiologically relevant. ATPase and casein kinase-activating functions are mutually exclusive. May be involved in mitotic chromosome segregation. This Mus musculus (Mouse) protein is ATP-dependent RNA helicase DDX3X (Ddx3x).